A 594-amino-acid chain; its full sequence is Dual specificity protein phosphatase CDC14A (594 aa).

Residues 7–162 (ELIGACEFMK…GLQHGFFDFE (156 aa)) are a. Residues 163 to 176 (TFDVDEYEHYERVE) are linker. The interval 177-343 (NGDFNWIVPG…QGDIFRSKLK (167 aa)) is b. The Tyrosine-protein phosphatase domain occupies 179-336 (DFNWIVPGKF…KQASLWVQGD (158 aa)). The active-site Phosphocysteine intermediate is C278. Residues 396-435 (GDKLRALKSQRQPRTSPSCAFRSDDTKGHPRAVSQPFRLS) form a disordered region. Positions 404-413 (SQRQPRTSPS) are enriched in polar residues. A Phosphoserine modification is found at S484. The segment at 487-560 (NLNAATDDPE…PGPHSAKTEE (74 aa)) is disordered. Positions 500-531 (TSSSSKAGFTASPFTNLLNGSSQPTTRNYPEL) are enriched in polar residues. Low complexity predominate over residues 532–549 (NNNQYNRSSNSNGGNLNS). Residue S583 is modified to Phosphoserine.

It belongs to the protein-tyrosine phosphatase family. Non-receptor class CDC14 subfamily. As to quaternary structure, interacts with KIF20A, which is required to localize CDC14 to the midzone of the mitotic spindle.

The protein resides in the nucleus. It is found in the cytoplasm. Its subcellular location is the cytoskeleton. It localises to the microtubule organizing center. The protein localises to the centrosome. The protein resides in the spindle pole. It is found in the spindle. Its subcellular location is the cell projection. It localises to the kinocilium. The protein localises to the stereocilium. It catalyses the reaction O-phospho-L-tyrosyl-[protein] + H2O = L-tyrosyl-[protein] + phosphate. It carries out the reaction O-phospho-L-seryl-[protein] + H2O = L-seryl-[protein] + phosphate. The catalysed reaction is O-phospho-L-threonyl-[protein] + H2O = L-threonyl-[protein] + phosphate. Its function is as follows. Dual-specificity phosphatase. Required for centrosome separation and productive cytokinesis during cell division. Dephosphorylates SIRT2 around early anaphase. May dephosphorylate the APC subunit FZR1/CDH1, thereby promoting APC-FZR1 dependent degradation of mitotic cyclins and subsequent exit from mitosis. Required for normal hearing. The chain is Dual specificity protein phosphatase CDC14A (CDC14A) from Homo sapiens (Human).